Consider the following 331-residue polypeptide: ADP,ATP carrier protein 2, mitochondrial (331 aa).

Solcar repeat units lie at residues 29–122, 134–226, and 238–320; these read KNFA…FKRM, KWFG…LKPV, and ASFA…LQIL. 5 helical membrane passes run 31–58, 99–123, 132–152, 202–223, and 237–257; these read FAIDFLMGGVSAAVSKTAAAPIERVKLL, TANVIRYFPTQALNFAFKDYFKRMF, YWKWFGGNLASGGAAGASSLF, FNISCVGIIVYRGLYFGLYDSL, and FASFALGWLITNGAGLASYPI. ADP contacts are provided by R104 and K116. Residue R261 participates in ADP binding. Residues 261 to 266 form an important for transport activity region; sequence RRRMMM. Residues 261 to 266 carry the Nucleotide carrier signature motif motif; sequence RRRMMM. Residues 297 to 317 traverse the membrane as a helical segment; sequence AGANILRAIAGAGVLSGYDQL.

Belongs to the mitochondrial carrier (TC 2.A.29) family. In terms of assembly, monomer.

It is found in the mitochondrion inner membrane. It catalyses the reaction ADP(in) + ATP(out) = ADP(out) + ATP(in). With respect to regulation, the matrix-open state (m-state) is inhibited by the membrane-permeable bongkrekic acid (BKA). The cytoplasmic-open state (c-state) is inhibited by the membrane-impermeable toxic inhibitor carboxyatractyloside (CATR). In terms of biological role, ADP:ATP antiporter that mediates import of ADP into the mitochondrial matrix for ATP synthesis, and export of ATP out to fuel the cell. Cycles between the cytoplasmic-open state (c-state) and the matrix-open state (m-state): operates by the alternating access mechanism with a single substrate-binding site intermittently exposed to either the cytosolic (c-state) or matrix (m-state) side of the inner mitochondrial membrane. The protein is ADP,ATP carrier protein 2, mitochondrial (ANT-G2) of Triticum aestivum (Wheat).